A 1583-amino-acid chain; its full sequence is Methyl-CpG-binding domain protein 5/6 homolog sba (1583 aa).

Positions 81 to 115 (AVHQQQQQHHHQQQQQQQHQQQQQILPAGLVNGNG) are disordered. The segment covering 83-104 (HQQQQQHHHQQQQQQQHQQQQQ) has biased composition (low complexity). The 71-residue stretch at 238 to 308 (RKTATSYNGN…YLFDFNAQVP (71 aa)) folds into the MBD domain. Disordered stretches follow at residues 427-457 (NKLP…PTSQ), 556-579 (EPIV…QQQL), 630-694 (VTLV…QTQV), 839-862 (AELH…AASS), 940-980 (PPAQ…ISPQ), 1179-1247 (VMSR…RSIC), and 1287-1339 (QESP…SFPL). Residues 430-439 (PATNRTATTP) show a composition bias toward low complexity. Residues 440–449 (TPAPTPPPQH) show a composition bias toward pro residues. Positions 563–579 (QQQQQQQQQQLQQQQQL) are enriched in low complexity. The span at 658 to 677 (AISTSHESPRQSLSSPTDSV) shows a compositional bias: polar residues. Composition is skewed to low complexity over residues 679-693 (SAKS…PQTQ) and 851-862 (VSQPSPVAAASS). Composition is skewed to polar residues over residues 1179 to 1195 (VMSR…TTTC), 1216 to 1240 (CVSS…PSST), and 1287 to 1313 (QESP…TVRT). Residues 1323-1333 (RGAARAAPSAS) show a composition bias toward low complexity. The region spanning 1346 to 1408 (IGELIWGPAR…VNSLQSLSEG (63 aa)) is the PWWP domain. Positions 1415–1446 (AQKDTRKSRKLNSQLERAIQEAMTELDNISAS) form a coiled coil. The tract at residues 1471–1497 (IGGQQQYQQQQQQQQQQQSPSSTNNKI) is disordered. Residues 1474-1488 (QQQYQQQQQQQQQQQ) are compositionally biased toward low complexity.

In terms of assembly, component of the polycomb repressive deubiquitinase (PR-DUB) complex, at least composed of caly/calypso, Asx and sba (MDB5/6 homolog). Interacts (via MBD domain) with Asx (via PHD domain); the interaction is important for the stability of the PR-DUB complex.

Functionally, non-catalytic component of the polycomb repressive deubiquitinase (PR-DUB) complex, a complex that specifically mediates deubiquitination of histone H2A monoubiquitinated at 'Lys-119' (H2AK118ub1). Important for maintaining stability of the PR-DUB complex. Probable epigenetic regulator involved in developmental pattern formation and eye development. In Drosophila melanogaster (Fruit fly), this protein is Methyl-CpG-binding domain protein 5/6 homolog sba.